The chain runs to 443 residues: Trigger factor (443 aa).

One can recognise a PPIase FKBP-type domain in the interval 165–250 (GDQVVMDFVG…IKEVKEPVAA (86 aa)).

This sequence belongs to the FKBP-type PPIase family. Tig subfamily.

Its subcellular location is the cytoplasm. It carries out the reaction [protein]-peptidylproline (omega=180) = [protein]-peptidylproline (omega=0). In terms of biological role, involved in protein export. Acts as a chaperone by maintaining the newly synthesized protein in an open conformation. Functions as a peptidyl-prolyl cis-trans isomerase. The protein is Trigger factor of Ruegeria pomeroyi (strain ATCC 700808 / DSM 15171 / DSS-3) (Silicibacter pomeroyi).